The chain runs to 143 residues: Nucleoside diphosphate kinase (143 aa).

ATP-binding residues include Lys11, Phe59, Arg87, Thr93, Arg104, and Asn114. His117 (pros-phosphohistidine intermediate) is an active-site residue.

This sequence belongs to the NDK family. As to quaternary structure, homotetramer. Requires Mg(2+) as cofactor.

It is found in the cytoplasm. It catalyses the reaction a 2'-deoxyribonucleoside 5'-diphosphate + ATP = a 2'-deoxyribonucleoside 5'-triphosphate + ADP. It carries out the reaction a ribonucleoside 5'-diphosphate + ATP = a ribonucleoside 5'-triphosphate + ADP. Major role in the synthesis of nucleoside triphosphates other than ATP. The ATP gamma phosphate is transferred to the NDP beta phosphate via a ping-pong mechanism, using a phosphorylated active-site intermediate. In Shigella boydii serotype 4 (strain Sb227), this protein is Nucleoside diphosphate kinase.